Reading from the N-terminus, the 221-residue chain is GFP-like non-fluorescent chromoprotein (221 aa).

The segment at residues 62-64 (QYG) is a cross-link (2-iminomethyl-5-imidazolinone (Gln-Gly)). Tyr63 carries the post-translational modification 2,3-didehydrotyrosine.

It belongs to the GFP family. In terms of assembly, homotetramer. Contains a chromophore consisting of modified amino acid residues. The chromophore is formed by autocatalytic backbone condensation between Xaa-N and Gly-(N+2), oxidation of Tyr-(N+1) to didehydrotyrosine, and formation of a double bond to the alpha-amino nitrogen of residue Xaa-N. Maturation of the chromophore requires nothing other than molecular oxygen. The precise stereochemistry of the tyrosine has not been determined.

Its function is as follows. Non-fluorescent pigment protein that is lilac in color. This is GFP-like non-fluorescent chromoprotein from Goniopora tenuidens (Anemone coral).